Consider the following 473-residue polypeptide: Glutamyl-tRNA reductase (473 aa).

Substrate is bound by residues 49–52 (TCNR), serine 109, 114–116 (EHQ), and glutamine 120. Cysteine 50 (nucleophile) is an active-site residue. 189-194 (GAGAMA) provides a ligand contact to NADP(+). The interval 422–473 (VAISAPQPSTDSPARAAYQPTDEAATDAEPRRDDAEPPSAAAAQDAGRESRP) is disordered.

Belongs to the glutamyl-tRNA reductase family. Homodimer.

The enzyme catalyses (S)-4-amino-5-oxopentanoate + tRNA(Glu) + NADP(+) = L-glutamyl-tRNA(Glu) + NADPH + H(+). The protein operates within porphyrin-containing compound metabolism; protoporphyrin-IX biosynthesis; 5-aminolevulinate from L-glutamyl-tRNA(Glu): step 1/2. Functionally, catalyzes the NADPH-dependent reduction of glutamyl-tRNA(Glu) to glutamate 1-semialdehyde (GSA). The polypeptide is Glutamyl-tRNA reductase (Acidothermus cellulolyticus (strain ATCC 43068 / DSM 8971 / 11B)).